Here is a 469-residue protein sequence, read N- to C-terminus: Phosphoenolpyruvate carboxylase (469 aa).

Belongs to the PEPCase type 2 family. As to quaternary structure, homotetramer. Requires Mg(2+) as cofactor.

It catalyses the reaction oxaloacetate + phosphate = phosphoenolpyruvate + hydrogencarbonate. Functionally, catalyzes the irreversible beta-carboxylation of phosphoenolpyruvate (PEP) to form oxaloacetate (OAA), a four-carbon dicarboxylic acid source for the tricarboxylic acid cycle. This is Phosphoenolpyruvate carboxylase from Pyrococcus abyssi (strain GE5 / Orsay).